A 319-amino-acid chain; its full sequence is Coproporphyrin III ferrochelatase 2 (319 aa).

Residues Y13, R30, 46 to 47 (RY), S54, and Y125 contribute to the Fe-coproporphyrin III site. Fe(2+)-binding residues include H181 and E262.

Belongs to the ferrochelatase family.

The protein resides in the cytoplasm. It catalyses the reaction Fe-coproporphyrin III + 2 H(+) = coproporphyrin III + Fe(2+). It participates in porphyrin-containing compound metabolism; protoheme biosynthesis. Functionally, involved in coproporphyrin-dependent heme b biosynthesis. Catalyzes the insertion of ferrous iron into coproporphyrin III to form Fe-coproporphyrin III. The protein is Coproporphyrin III ferrochelatase 2 of Bacillus cereus (strain ZK / E33L).